The following is a 1147-amino-acid chain: Disease resistance protein RPP4 (1147 aa).

Positions 11-175 (RRYDVFPSFS…KIANDVSNKL (165 aa)) constitute a TIR domain. The active site involves glutamate 86. The NB-ARC domain occupies 189–446 (EDHIKAIKSI…CFFNGFKVSN (258 aa)). LRR repeat units lie at residues 548-573 (MRNLQYLEIGHWSEIGLWSEIGLWSK), 584-606 (PLKLKLLKWNYCPLKSLPSTFKA), 608-629 (YLVNLIMKYSKLEKLWEGTLPL), 630-653 (GSLKKMDLGCSNNLKEIPDLSLAI), 655-676 (LEELNLSKCESLVTLPSSIQNA), 698-721 (MCNLEYLSVDWSSMEGTQGLIYLP), 722-743 (RKLKRLWWDYCPVKRLPSNFKA), 744-766 (EYLVELRMENSDLEKLWDGTQPL), 767-790 (GSLKEMYLHGSKYLKEIPDLSLAI), 792-813 (LERLYLFGCESLVTLPSSIQNA), 814-836 (TKLINLDMRDCKKLESFPTDLNL), 837-860 (ESLEYLNLTGCPNLRNFPAIKMGC), 926-950 (LGSLKRMDLSESENLTEIPDLSKAT), 952-973 (LKRLYLNGCKSLVTLPSTIGNL), 974-996 (HRLVRLEMKECTGLELLPTDVNL), 997-1017 (SSLIILDLSGCSSLRTFPLIS), 1018-1042 (TRIECLYLENTAIEEVPCCIEDLTR), and 1044-1064 (SVLLMYCCQRLKNISPNIFRL).

As to quaternary structure, interacts with RSH1.

It catalyses the reaction NAD(+) + H2O = ADP-D-ribose + nicotinamide + H(+). TIR-NB-LRR receptor-like protein that confers resistance to the pathogen Hyaloperonospora arabidopsis isolates Emoy2 and Emwa1 (downy mildew disease). Plays a role in the regulation of temperature response during plant growth and survival. This is Disease resistance protein RPP4 from Arabidopsis thaliana (Mouse-ear cress).